A 66-amino-acid polypeptide reads, in one-letter code: COP-associated protein (66 aa).

Positions methionine 1–valine 66 constitute an HMA domain. Residues cysteine 12 and cysteine 15 each contribute to the Cu cation site.

Functionally, part of a cation-transporting system which is associated with copper export out of the H.pylori cells. The protein is COP-associated protein (copP) of Helicobacter pylori (strain J99 / ATCC 700824) (Campylobacter pylori J99).